A 314-amino-acid chain; its full sequence is Mycothiol acetyltransferase (314 aa).

N-acetyltransferase domains are found at residues 18-156 (ATIR…RPLA) and 168-314 (IRIA…MYQL). Glutamate 38 is a binding site for 1D-myo-inositol 2-(L-cysteinylamino)-2-deoxy-alpha-D-glucopyranoside. Residue 92-94 (VVV) coordinates acetyl-CoA. 1D-myo-inositol 2-(L-cysteinylamino)-2-deoxy-alpha-D-glucopyranoside-binding residues include glutamate 195, lysine 234, and glutamate 248. Acetyl-CoA-binding positions include 252 to 254 (VGL) and 259 to 265 (QGHGLGR). 1D-myo-inositol 2-(L-cysteinylamino)-2-deoxy-alpha-D-glucopyranoside is bound at residue tyrosine 286.

The protein belongs to the acetyltransferase family. MshD subfamily. In terms of assembly, monomer.

The catalysed reaction is 1D-myo-inositol 2-(L-cysteinylamino)-2-deoxy-alpha-D-glucopyranoside + acetyl-CoA = mycothiol + CoA + H(+). Its function is as follows. Catalyzes the transfer of acetyl from acetyl-CoA to desacetylmycothiol (Cys-GlcN-Ins) to form mycothiol. The sequence is that of Mycothiol acetyltransferase from Catenulispora acidiphila (strain DSM 44928 / JCM 14897 / NBRC 102108 / NRRL B-24433 / ID139908).